We begin with the raw amino-acid sequence, 195 residues long: Dephospho-CoA kinase (195 aa).

One can recognise a DPCK domain in the interval 3–195 (KIGLTGGIGS…ANMKNVIAEI (193 aa)). 11–16 (GSGKST) provides a ligand contact to ATP.

Belongs to the CoaE family.

It is found in the cytoplasm. It carries out the reaction 3'-dephospho-CoA + ATP = ADP + CoA + H(+). It participates in cofactor biosynthesis; coenzyme A biosynthesis; CoA from (R)-pantothenate: step 5/5. Functionally, catalyzes the phosphorylation of the 3'-hydroxyl group of dephosphocoenzyme A to form coenzyme A. This chain is Dephospho-CoA kinase, found in Corynebacterium glutamicum (Brevibacterium saccharolyticum).